The primary structure comprises 154 residues: Methylglyoxal synthase (154 aa).

One can recognise an MGS-like domain in the interval Gly-6–Leu-154. Residues His-19, Lys-23, Thr-45 to Thr-48, and Ser-65 to Gly-66 contribute to the substrate site. The active-site Proton donor/acceptor is the Asp-71. His-98 provides a ligand contact to substrate.

The protein belongs to the methylglyoxal synthase family.

The catalysed reaction is dihydroxyacetone phosphate = methylglyoxal + phosphate. Catalyzes the formation of methylglyoxal from dihydroxyacetone phosphate. This Saccharophagus degradans (strain 2-40 / ATCC 43961 / DSM 17024) protein is Methylglyoxal synthase.